Reading from the N-terminus, the 291-residue chain is MMYSFIARNKINTFLILFVFILACGGFGLLAGRFLGMSFFLFILLLAAGYACVQYFFSGRLAVLMSGARKISRNDNPRLWNTVENLSITTGLPMPEVYIVDDPAPNAFATGRDPKHAKVAATSGLLEILDDSELEGVMAHEMGHVKNYDIRVSTIVFGLVSAVGLISDMVLRALIWGDNRREGNSAFSFVIVLFFSLLAPIAAMLVQLAVSREREYLADATGALTTRYPAALASALAKLEGNARPLQRQSSSMAHLWISNPMPRGFFRKLFSTHPPTEERIRRLKEMGNQF.

2 helical membrane passes run 11 to 31 (INTF…GLLA) and 34 to 54 (FLGM…ACVQ). Residue histidine 140 coordinates Zn(2+). Residue glutamate 141 is part of the active site. Histidine 144 provides a ligand contact to Zn(2+). A run of 2 helical transmembrane segments spans residues 155-175 (IVFG…RALI) and 186-206 (AFSF…AMLV). Glutamate 215 contacts Zn(2+).

This sequence belongs to the peptidase M48B family. It depends on Zn(2+) as a cofactor.

The protein localises to the cell membrane. This Tropheryma whipplei (strain Twist) (Whipple's bacillus) protein is Protease HtpX homolog.